We begin with the raw amino-acid sequence, 391 residues long: MAKSKFERTKPHVNIGTIGHVDHGKTSLTAAITKYFGEFKAYDQIDAAPEERARGITISTAHVEYETDQRHYAHVDCPGHADYVKNMITGAAQMDGAILVVSAADGPMPQTREHILLARQVGVPAIVVFLNKVDQVDDAELLELVELEVRELLSKYDFPGDDIPIVKGSALAALEDSDKSIGEDAVRLLMSEVDRYIPTPERPVDQSFLMPIEDVFSISGRGTVVTGRVERGVVKVGEEIEIVGIRPTSKTTVTGVEMFRKLLDQGQAGDNIGALLRGIDREGIERGQVLAKPGSVTPHTKFKAEAYILTKDEGGRHTPFFTNYRPQFYFRTTDVTGIVTLPEGTEMVMPGDNVAMDVSLIVPIAMEEKLRFAIREGGRTVGAGIVSKIIE.

A tr-type G domain is found at 10 to 201 (KPHVNIGTIG…EVDRYIPTPE (192 aa)). The tract at residues 19-26 (GHVDHGKT) is G1. Residue 19 to 26 (GHVDHGKT) coordinates GTP. T26 contacts Mg(2+). The segment at 55-59 (GITIS) is G2. The segment at 76-79 (DCPG) is G3. GTP is bound by residues 76-80 (DCPGH) and 131-134 (NKVD). Residues 131 to 134 (NKVD) form a G4 region. Residues 169–171 (SAL) are G5.

Belongs to the TRAFAC class translation factor GTPase superfamily. Classic translation factor GTPase family. EF-Tu/EF-1A subfamily. As to quaternary structure, monomer.

It localises to the cytoplasm. It catalyses the reaction GTP + H2O = GDP + phosphate + H(+). GTP hydrolase that promotes the GTP-dependent binding of aminoacyl-tRNA to the A-site of ribosomes during protein biosynthesis. The protein is Elongation factor Tu 2 of Bartonella bacilliformis (strain ATCC 35685 / KC583 / Herrer 020/F12,63).